The sequence spans 438 residues: Ornithine aminotransferase car2 (438 aa).

Residue Lys-275 is modified to N6-(pyridoxal phosphate)lysine.

It belongs to the class-III pyridoxal-phosphate-dependent aminotransferase family. Pyridoxal 5'-phosphate serves as cofactor.

The protein localises to the cytoplasm. Its subcellular location is the nucleus. The enzyme catalyses a 2-oxocarboxylate + L-ornithine = L-glutamate 5-semialdehyde + an L-alpha-amino acid. Its pathway is amino-acid biosynthesis; L-proline biosynthesis; L-glutamate 5-semialdehyde from L-ornithine: step 1/1. The chain is Ornithine aminotransferase car2 (car2) from Schizosaccharomyces pombe (strain 972 / ATCC 24843) (Fission yeast).